The chain runs to 494 residues: UPF0371 protein SpyM3_1021 (494 aa).

It belongs to the UPF0371 family.

This Streptococcus pyogenes serotype M3 (strain ATCC BAA-595 / MGAS315) protein is UPF0371 protein SpyM3_1021.